The primary structure comprises 64 residues: MKYTEIKEKSLQELEGLLKEKKLELFGLRMKLKTMQLQDTSAIRKTRKDIARIKTAIAEKRRAG.

The protein belongs to the universal ribosomal protein uL29 family.

The chain is Large ribosomal subunit protein uL29 from Nitratiruptor sp. (strain SB155-2).